We begin with the raw amino-acid sequence, 262 residues long: Adenosylcobinamide-GDP ribazoletransferase (262 aa).

Helical transmembrane passes span 37–57, 58–78, 112–132, 139–159, 183–203, 205–225, and 237–257; these read SMPL…ALCS, MFSF…GIWL, VGAF…LFLY, IPPA…AWLL, AVWA…FGGV, VWTS…AKPW, and VLGA…WLLH.

It belongs to the CobS family. Requires Mg(2+) as cofactor.

The protein localises to the cell membrane. The catalysed reaction is alpha-ribazole + adenosylcob(III)inamide-GDP = adenosylcob(III)alamin + GMP + H(+). The enzyme catalyses alpha-ribazole 5'-phosphate + adenosylcob(III)inamide-GDP = adenosylcob(III)alamin 5'-phosphate + GMP + H(+). It functions in the pathway cofactor biosynthesis; adenosylcobalamin biosynthesis; adenosylcobalamin from cob(II)yrinate a,c-diamide: step 7/7. Joins adenosylcobinamide-GDP and alpha-ribazole to generate adenosylcobalamin (Ado-cobalamin). Also synthesizes adenosylcobalamin 5'-phosphate from adenosylcobinamide-GDP and alpha-ribazole 5'-phosphate. This chain is Adenosylcobinamide-GDP ribazoletransferase, found in Geobacillus thermodenitrificans (strain NG80-2).